The primary structure comprises 147 residues: Small ribosomal subunit protein uS12 (147 aa).

It belongs to the universal ribosomal protein uS12 family. In terms of assembly, part of the 30S ribosomal subunit.

With S4 and S5 plays an important role in translational accuracy. Located at the interface of the 30S and 50S subunits. The sequence is that of Small ribosomal subunit protein uS12 from Thermococcus celer.